A 123-amino-acid chain; its full sequence is Large ribosomal subunit protein eL8 (123 aa).

Belongs to the eukaryotic ribosomal protein eL8 family. As to quaternary structure, part of the 50S ribosomal subunit. Probably part of the RNase P complex.

The protein resides in the cytoplasm. In terms of biological role, multifunctional RNA-binding protein that recognizes the K-turn motif in ribosomal RNA, the RNA component of RNase P, box H/ACA, box C/D and box C'/D' sRNAs. This is Large ribosomal subunit protein eL8 from Thermococcus gammatolerans (strain DSM 15229 / JCM 11827 / EJ3).